Reading from the N-terminus, the 123-residue chain is YLNNFRYLYIRHDREACTCHANSCIMSAYFSNSHVQYENYINDCKPQCILNELHSWVECESGECCEQCRSECDIAESCTNGQPLHNFGYCYNGNCPIMYHQCYLYCYNSLGNQFPCVPYYTPR.

Residues 6 to 52 (RYLYIRHDREACTCHANSCIMSAYFSNSHVQYENYINDCKPQCILNE) enclose the Peptidase M12B domain. Zn(2+) is bound at residue H12. C19 and C24 are disulfide-bonded. Ca(2+) is bound by residues C48 and N51. In terms of domain architecture, Disintegrin spans 53–80 (LHSWVECESGECCEQCRSECDIAESCTN). 4 disulfides stabilise this stretch: C59-C65, C64-C78, C72-C90, and C106-C116. A D/ECD-tripeptide motif is present at residues 71–73 (ECD).

This sequence belongs to the venom metalloproteinase (M12B) family. P-III subfamily. P-IIIa sub-subfamily. As to quaternary structure, monomer. It depends on Zn(2+) as a cofactor. Post-translationally, the N-terminus is blocked. As to expression, expressed by the venom gland.

It is found in the secreted. Its activity is regulated as follows. Its proteolytic and hemorrhagic activities are inhibited by EDTA, but not by PMSF. Its function is as follows. Snake venom metalloproteinase that has high hemorrhagic activity and degrades the alpha-chain of fibrinogen (FGA), leaving the beta- and the gamma-chain intact. It may also inhibit platelet aggregation. Cleaves insulin B chain at '25-Phe-|-Val-26', '26-Val-|-Asn-27', '29-His-|-Leu-30', '30-Leu-|-Cys-31', '33-Ser-|-His-34', '35-Leu-|-Val-36', '40-Tyr-|-Leu-41', '41-Leu-|-Val-42', '42-Val-|-Cys-43', '43-Cys-|-Gly-44', '44-Gly-|-Glu-45', '46-Arg-|-Gly-47', '47-Gly-|-Phe-48', '49-Phe-|-Tyr-50' and '52-Pro-|-Lys-53' bonds. Also cleaves human prothrombin (72 kDa) and activation fragment F1 (27 kDa) of activated human prothrombin, to generate two new proteins of 68 and 23 kDa. The chain is Zinc metalloproteinase-disintegrin-like jerdohagin from Protobothrops jerdonii (Jerdon's pitviper).